Reading from the N-terminus, the 333-residue chain is HTH-type transcriptional regulator pepR1 (333 aa).

The HTH lacI-type domain maps to 6–60 (VTIYDVAREAKVSMATVSRVVNGNNNVRKETRDRVMEVIKRLHYQPNAVAQGLAS). Positions 8–27 (IYDVAREAKVSMATVSRVVN) form a DNA-binding region, H-T-H motif.

Transcriptional regulator of the pepQ gene for prolidase. This Lactobacillus delbrueckii subsp. lactis protein is HTH-type transcriptional regulator pepR1 (pepR1).